Here is a 262-residue protein sequence, read N- to C-terminus: tRNA 4-demethylwyosine(37)-methyltransferase Taw21 (262 aa).

S-adenosyl-L-methionine contacts are provided by residues H108, F125, 148–149, and 175–176; these read DL and DA.

This sequence belongs to the class I-like SAM-binding methyltransferase superfamily. TRM5/TYW2 family.

It localises to the cytoplasm. The catalysed reaction is 4-demethylwyosine(37) in tRNA(Phe) + S-adenosyl-L-methionine = isowyosine(37) in tRNA(Phe) + S-adenosyl-L-homocysteine + H(+). Functionally, catalyzes the C7-methylation of 4-demethylwyosine (imG-14) at position 37 in tRNA(Phe). The chain is tRNA 4-demethylwyosine(37)-methyltransferase Taw21 from Saccharolobus solfataricus (strain ATCC 35092 / DSM 1617 / JCM 11322 / P2) (Sulfolobus solfataricus).